The chain runs to 512 residues: ATP synthase subunit alpha (512 aa).

169-176 serves as a coordination point for ATP; the sequence is GDRQTGKT.

This sequence belongs to the ATPase alpha/beta chains family. As to quaternary structure, F-type ATPases have 2 components, CF(1) - the catalytic core - and CF(0) - the membrane proton channel. CF(1) has five subunits: alpha(3), beta(3), gamma(1), delta(1), epsilon(1). CF(0) has four main subunits: a(1), b(1), b'(1) and c(9-12).

The protein localises to the cell inner membrane. It catalyses the reaction ATP + H2O + 4 H(+)(in) = ADP + phosphate + 5 H(+)(out). Produces ATP from ADP in the presence of a proton gradient across the membrane. The alpha chain is a regulatory subunit. The chain is ATP synthase subunit alpha from Cereibacter sphaeroides (strain ATCC 17025 / ATH 2.4.3) (Rhodobacter sphaeroides).